Reading from the N-terminus, the 184-residue chain is Nucleoporin-62 C-terminal-like protein (184 aa).

Positions 117–151 (RILHGEVNKVKLDQKRLEQELDFILSQQQELEFLL) form a coiled coil.

It belongs to the nucleoporin NSP1/NUP62 family.

In Homo sapiens (Human), this protein is Nucleoporin-62 C-terminal-like protein (NUP62CL).